A 360-amino-acid polypeptide reads, in one-letter code: Plastid lipid-associated protein 3, chloroplastic (360 aa).

The span at 1 to 37 shows a compositional bias: polar residues; that stretch reads MATLFTVTTTSRPFPANPSKTFSPSISLKPNALSFSL. Residues 1-52 constitute a chloroplast transit peptide; the sequence is MATLFTVTTTSRPFPANPSKTFSPSISLKPNALSFSLTHHRPPRPLRFSKIR. A disordered region spans residues 1–130; sequence MATLFTVTTT…EWEEREADDG (130 aa). Residues 38-50 show a composition bias toward basic residues; sequence THHRPPRPLRFSK. Residues 53–68 are compositionally biased toward low complexity; it reads SSLPSESDSEPEGGYS. Acidic residues predominate over residues 117-127; sequence TNEDEWEEREA.

This sequence belongs to the PAP/fibrillin family. Ubiquitous expression among various organs, but only at a very low level.

It localises to the plastid. The protein resides in the chloroplast. This Brassica campestris (Field mustard) protein is Plastid lipid-associated protein 3, chloroplastic (PAP3).